The following is a 425-amino-acid chain: Putative dipeptidase MGYG_00085 (425 aa).

Residues 1–31 form the signal peptide; sequence MAPERRSRLSETAGLFVSLLALTSIVPVQAV. Zn(2+) contacts are provided by His56, Asp58, and Glu168. Cysteines 107 and 197 form a disulfide. His195 lines the substrate pocket. Zn(2+) is bound by residues His239 and His260. 2 residues coordinate substrate: Arg271 and Asp331. Asn403 carries N-linked (GlcNAc...) asparagine glycosylation.

It belongs to the metallo-dependent hydrolases superfamily. Peptidase M19 family. It depends on Zn(2+) as a cofactor.

The enzyme catalyses an L-aminoacyl-L-amino acid + H2O = 2 an L-alpha-amino acid. In terms of biological role, hydrolyzes a wide range of dipeptides. The sequence is that of Putative dipeptidase MGYG_00085 from Arthroderma gypseum (strain ATCC MYA-4604 / CBS 118893) (Microsporum gypseum).